A 951-amino-acid chain; its full sequence is MLKLLLGDPNARKLKRYQPIVTDINILEEDIALLSDDQLRSKTADFRQQFENVVSFPKQRVLLDELLPEAFAVVREAAKRVLGMRHFDVQLIGGMVLHEGQIGEMKTGEGKTLVATLPSYLNALTGRGVHVVTVNDYLARRDAEWMGQVHRFLGLSVGLIQQDMSPAERRRNYACDITYATNSELGFDYLRDNMATDLSEVVQREFQYCVIDEVDSILIDEARTPLIISGQVERPQEKYQQAADVAAALERAAEQGKDGIDPEGDYEVDEKQRSCTLTDEGFAKAEQNLKVRDLFDPADPWAHYITNALKAKELFVRDVNYIVRDGEAVIVDEFTGRVMPGRRWSDGQHQAIEAKEQLAIQPETQTLASITYQNFFLLYPRLAGMTGTAKTEEVEFEKTYKLETSVIPTNQPRARADWVDQVYKTESAKWRAVANETAEIHKQGRPVLVGTTSVEKSELLSSLLSEQEIPHNLLNAKPENVEREAEIVAQAGRAGAVTIATNMAGRGTDIILGGNSDYMARLKLREVLLPRLVRPEEGHRPPVPLQRAAETGGGFAAKAAASNGSHGHVLSEARAIGSLYPCSLTDDTDQFLAELARELVKVWGDRALSVIELEDRISTAAEKAPTDDAQIAALRESIARVKTEYDVVVTQEEVRVREAGGLHVIGTERHESRRVDNQLRGRAGRQGDLGSTRFFLSLEDNLLRIFGGERVASLMNAFRVEEDMPIESGMLTRSLEGAQKKVETYYYDIRKQVFEYDEVMNNQRRAVYAERRRVLEGRGLKKQVIGYGERTMDDVVEAYVNPDLPPEEWDLDQLVSKVQEFVYLLEDLKPEQLQGLSMEELKSFLQEQLRNAYDIKEGQIEQQRPGLMREAERFFILQQIDTLWREHLQAMDALRESVGLRGYGQKDPLIEYKNEGYDMFLEMMANMRRNVIYSMFMFQPAPAPAQEAANV.

Residues glutamine 90, 108–112, and aspartate 509 each bind ATP; that span reads GEGKT.

It belongs to the SecA family. Monomer and homodimer. Part of the essential Sec protein translocation apparatus which comprises SecA, SecYEG and auxiliary proteins SecDF. Other proteins may also be involved.

Its subcellular location is the cell inner membrane. It localises to the cellular thylakoid membrane. It is found in the cytoplasm. It carries out the reaction ATP + H2O + cellular proteinSide 1 = ADP + phosphate + cellular proteinSide 2.. Part of the Sec protein translocase complex. Interacts with the SecYEG preprotein conducting channel. Has a central role in coupling the hydrolysis of ATP to the transfer of proteins into and across the cell membrane, serving as an ATP-driven molecular motor driving the stepwise translocation of polypeptide chains across the membrane. Functionally, probably participates in protein translocation into and across both the cytoplasmic and thylakoid membranes in cyanobacterial cells. The sequence is that of Protein translocase subunit SecA from Prochlorococcus marinus (strain MIT 9303).